The sequence spans 446 residues: Exodeoxyribonuclease 7 large subunit (446 aa).

The protein belongs to the XseA family. As to quaternary structure, heterooligomer composed of large and small subunits.

The protein localises to the cytoplasm. It carries out the reaction Exonucleolytic cleavage in either 5'- to 3'- or 3'- to 5'-direction to yield nucleoside 5'-phosphates.. Functionally, bidirectionally degrades single-stranded DNA into large acid-insoluble oligonucleotides, which are then degraded further into small acid-soluble oligonucleotides. In Streptococcus pyogenes serotype M3 (strain ATCC BAA-595 / MGAS315), this protein is Exodeoxyribonuclease 7 large subunit.